Reading from the N-terminus, the 156-residue chain is Ribosomal RNA large subunit methyltransferase H (156 aa).

Residues leucine 72 and glycine 104 each coordinate S-adenosyl-L-methionine.

This sequence belongs to the RNA methyltransferase RlmH family. Homodimer.

It is found in the cytoplasm. The catalysed reaction is pseudouridine(1915) in 23S rRNA + S-adenosyl-L-methionine = N(3)-methylpseudouridine(1915) in 23S rRNA + S-adenosyl-L-homocysteine + H(+). Functionally, specifically methylates the pseudouridine at position 1915 (m3Psi1915) in 23S rRNA. This chain is Ribosomal RNA large subunit methyltransferase H, found in Maricaulis maris (strain MCS10) (Caulobacter maris).